The sequence spans 169 residues: Gastrula zinc finger protein XlCGF62.1 (169 aa).

6 consecutive C2H2-type zinc fingers follow at residues phenylalanine 6–histidine 28, phenylalanine 34–histidine 56, phenylalanine 62–histidine 84, phenylalanine 90–histidine 113, phenylalanine 119–histidine 141, and phenylalanine 147–histidine 169.

The protein belongs to the krueppel C2H2-type zinc-finger protein family.

Its subcellular location is the nucleus. Its function is as follows. May be involved in transcriptional regulation. This is Gastrula zinc finger protein XlCGF62.1 from Xenopus laevis (African clawed frog).